A 656-amino-acid polypeptide reads, in one-letter code: Anion exchange transporter (656 aa).

Topologically, residues Met-1–His-75 are cytoplasmic. The helical transmembrane segment at Pro-76–Gly-96 threads the bilayer. The Extracellular portion of the chain corresponds to His-97 to Arg-144. A helical transmembrane segment spans residues Ile-145–Leu-165. Residue Gln-166 is a topological domain, cytoplasmic. The chain crosses the membrane as a helical span at residues Leu-167–Ala-187. At Thr-188 to Lys-202 the chain is on the extracellular side. Residues Met-203 to Ile-223 form a helical membrane-spanning segment. The Cytoplasmic portion of the chain corresponds to Lys-224–Arg-227. The helical transmembrane segment at Leu-228–Asn-248 threads the bilayer. The Extracellular portion of the chain corresponds to Glu-249–Lys-254. The helical transmembrane segment at Ile-255–Cys-275 threads the bilayer. The Cytoplasmic segment spans residues Thr-276–Ser-306. A helical membrane pass occupies residues Ala-307 to Ala-327. Residues Gln-328–Glu-343 are Extracellular-facing. Residues Phe-344–Ala-364 traverse the membrane as a helical segment. Topologically, residues Ala-365–Cys-383 are cytoplasmic. The next 2 helical transmembrane spans lie at Leu-384–Leu-404 and Pro-405–Arg-425. Residues Asp-426–Thr-448 lie on the Extracellular side of the membrane. A helical membrane pass occupies residues Ile-449–Ile-469. At Gly-470 to Val-656 the chain is on the cytoplasmic side. The STAS domain occupies Thr-492–Ile-641. A membrane targeting region spans residues Ile-641–Val-656.

Belongs to the SLC26A/SulP transporter (TC 2.A.53) family. Expressed in the thyroid gland (at protein level). Expressed in tonsillar high endothelial venule endothelial cells (HEVEC), placenta and in testis, expressed in a subgroup of basal cells in the epididymal ducts.

It localises to the basolateral cell membrane. The protein localises to the recycling endosome membrane. The protein resides in the apical cell membrane. It is found in the lateral cell membrane. It carries out the reaction chloride(in) = chloride(out). The enzyme catalyses iodide(out) = iodide(in). The catalysed reaction is bromide(in) = bromide(out). It catalyses the reaction oxalate(in) = oxalate(out). It carries out the reaction nitrate(in) = nitrate(out). The enzyme catalyses sulfate(in) = sulfate(out). The catalysed reaction is thiocyanate(in) = thiocyanate(out). It catalyses the reaction D-gluconate(in) = D-gluconate(out). It carries out the reaction hydrogencarbonate(in) = hydrogencarbonate(out). The enzyme catalyses hydrogencarbonate(in) + chloride(out) = hydrogencarbonate(out) + chloride(in). Is active at both alkaline and acidic pH. Activity is inhibited by 4,4'-Di-isothiocyanatostilbene-2,2'-disulfonic acid (DIDS - an inhibitor of several anion channels and transporters). Its function is as follows. Acts as an anion channel mediating the transport of chloride, sulfate and oxalate ions. Mediates the transport of bromide, iodide, nitrate, gluconate, thiocyanate and bicarbonate ions. Its permeability towards bicarbonate is weak and increases when pH is above 7. Mediates thiocyanate transport in retinal pigment epithelium cells. Mediates iodide transport in the thyroid gland, playing an important role in the synthesis of thyroid hormones and the maintenance of thyroid function. Although it is an anion channel, according to PubMed:12736153 and PubMed:32119864 it has been shown to exhibit chloride-bicarbonate exchanger activity. The polypeptide is Anion exchange transporter (Homo sapiens (Human)).